We begin with the raw amino-acid sequence, 233 residues long: uncharacterized protein (233 aa).

Asn58, Asn77, Asn93, Asn102, Asn110, Asn120, and Asn155 each carry an N-linked (GlcNAc...) asparagine; by host glycan. The segment covering 102-124 (NSSTTTTTNASSSDSSMYNTTRS) has biased composition (low complexity). The segment at 102–132 (NSSTTTTTNASSSDSSMYNTTRSTQRRVTYD) is disordered. A helical transmembrane segment spans residues 168–188 (FSLLQWVLVAALAFFMYYFLW).

It belongs to the ascovirus HvAv ORF58 family.

Its subcellular location is the membrane. This is an uncharacterized protein from Trichoplusia ni ascovirus 2c (TnAV-2c).